The sequence spans 230 residues: Lactate utilization protein C (230 aa).

The protein belongs to the LutC/YkgG family.

Its function is as follows. Is involved in L-lactate degradation and allows cells to grow with lactate as the sole carbon source. In Halalkalibacterium halodurans (strain ATCC BAA-125 / DSM 18197 / FERM 7344 / JCM 9153 / C-125) (Bacillus halodurans), this protein is Lactate utilization protein C.